A 90-amino-acid polypeptide reads, in one-letter code: Accessory gland-specific peptide 26Ab (90 aa).

The signal sequence occupies residues 1-21 (MNYFAVLCIFSCICLWQFSDA).

As to expression, main cells of the accessory glands of males.

The protein resides in the secreted. It is found in the extracellular space. Functionally, this protein is transferred from male to female during mating and may affect egglaying and behavior after mating. In Drosophila sechellia (Fruit fly), this protein is Accessory gland-specific peptide 26Ab (Acp26Ab).